The sequence spans 529 residues: Bifunctional purine biosynthesis protein PurH (529 aa).

The MGS-like domain occupies 1 to 148 (MQQRRPIRRA…KNHKDVAIVV (148 aa)).

The protein belongs to the PurH family.

The enzyme catalyses (6R)-10-formyltetrahydrofolate + 5-amino-1-(5-phospho-beta-D-ribosyl)imidazole-4-carboxamide = 5-formamido-1-(5-phospho-D-ribosyl)imidazole-4-carboxamide + (6S)-5,6,7,8-tetrahydrofolate. The catalysed reaction is IMP + H2O = 5-formamido-1-(5-phospho-D-ribosyl)imidazole-4-carboxamide. Its pathway is purine metabolism; IMP biosynthesis via de novo pathway; 5-formamido-1-(5-phospho-D-ribosyl)imidazole-4-carboxamide from 5-amino-1-(5-phospho-D-ribosyl)imidazole-4-carboxamide (10-formyl THF route): step 1/1. It participates in purine metabolism; IMP biosynthesis via de novo pathway; IMP from 5-formamido-1-(5-phospho-D-ribosyl)imidazole-4-carboxamide: step 1/1. This chain is Bifunctional purine biosynthesis protein PurH, found in Yersinia pseudotuberculosis serotype O:1b (strain IP 31758).